The following is a 360-amino-acid chain: DNA replication and repair protein RecF (360 aa).

Residue 30–37 (GQNGSGKT) coordinates ATP.

It belongs to the RecF family.

It is found in the cytoplasm. In terms of biological role, the RecF protein is involved in DNA metabolism; it is required for DNA replication and normal SOS inducibility. RecF binds preferentially to single-stranded, linear DNA. It also seems to bind ATP. This chain is DNA replication and repair protein RecF, found in Shewanella baltica (strain OS155 / ATCC BAA-1091).